The chain runs to 365 residues: tRNA/tmRNA (uracil-C(5))-methyltransferase (365 aa).

Residues glutamine 196, tyrosine 224, asparagine 229, glutamate 245, and aspartate 298 each contribute to the S-adenosyl-L-methionine site. Cysteine 323 acts as the Nucleophile in catalysis. The Proton acceptor role is filled by glutamate 357.

Belongs to the class I-like SAM-binding methyltransferase superfamily. RNA M5U methyltransferase family. TrmA subfamily.

It catalyses the reaction uridine(54) in tRNA + S-adenosyl-L-methionine = 5-methyluridine(54) in tRNA + S-adenosyl-L-homocysteine + H(+). The enzyme catalyses uridine(341) in tmRNA + S-adenosyl-L-methionine = 5-methyluridine(341) in tmRNA + S-adenosyl-L-homocysteine + H(+). Functionally, dual-specificity methyltransferase that catalyzes the formation of 5-methyluridine at position 54 (m5U54) in all tRNAs, and that of position 341 (m5U341) in tmRNA (transfer-mRNA). In Nautilia profundicola (strain ATCC BAA-1463 / DSM 18972 / AmH), this protein is tRNA/tmRNA (uracil-C(5))-methyltransferase.